Here is a 280-residue protein sequence, read N- to C-terminus: Ribosomal RNA small subunit methyltransferase A (280 aa).

Residues Asn30, Val32, Gly57, Glu78, Asp108, and Asn125 each contribute to the S-adenosyl-L-methionine site.

It belongs to the class I-like SAM-binding methyltransferase superfamily. rRNA adenine N(6)-methyltransferase family. RsmA subfamily.

It is found in the cytoplasm. It catalyses the reaction adenosine(1518)/adenosine(1519) in 16S rRNA + 4 S-adenosyl-L-methionine = N(6)-dimethyladenosine(1518)/N(6)-dimethyladenosine(1519) in 16S rRNA + 4 S-adenosyl-L-homocysteine + 4 H(+). Its function is as follows. Specifically dimethylates two adjacent adenosines (A1518 and A1519) in the loop of a conserved hairpin near the 3'-end of 16S rRNA in the 30S particle. May play a critical role in biogenesis of 30S subunits. The chain is Ribosomal RNA small subunit methyltransferase A from Leifsonia xyli subsp. xyli (strain CTCB07).